Reading from the N-terminus, the 1838-residue chain is Nuclear pore complex protein NUP205 (1838 aa).

It belongs to the NUP186/NUP192/NUP205 family. Part of the nuclear pore complex (NPC). The NPC has an eight-fold symmetrical structure comprising a central transport channel and two rings, the cytoplasmic and nuclear rings, to which eight filaments are attached. The cytoplasmic filaments have loose ends, while the nuclear filaments are joined in a distal ring, forming a nuclear basket. NPCs are highly dynamic in configuration and composition, and can be devided in 3 subcomplexes, the NUP62 subcomplex, the NUP107-160 subcomplex and the NUP93 subcomplex, containing approximately 30 different nucleoporin proteins.

It localises to the nucleus envelope. Its subcellular location is the nucleus. It is found in the nuclear pore complex. In Arabidopsis thaliana (Mouse-ear cress), this protein is Nuclear pore complex protein NUP205.